A 380-amino-acid polypeptide reads, in one-letter code: Cytochrome b (380 aa).

4 helical membrane-spanning segments follow: residues 34–54 (FGSLLGICLATQILTGLLLAA), 78–99 (WLIRNLHANGASFFFICIYLHI), 114–134 (WNTGIILLLTLMATAFVGYVL), and 179–199 (FFTLHFLLPFMIAGLTLIHLT). Residues His-84 and His-98 each contribute to the heme b site. Heme b is bound by residues His-183 and His-197. Position 202 (His-202) interacts with a ubiquinone. 4 helical membrane-spanning segments follow: residues 227–247 (TKDILGFILLLLPLTALALFS), 289–309 (LGGVLALAASVLILFLIPLLH), 321–341 (LSQLLFWTLVANLTILTWIGS), and 348–368 (FIIIGQLASLTYFTILLILFP).

The protein belongs to the cytochrome b family. As to quaternary structure, the cytochrome bc1 complex contains 11 subunits: 3 respiratory subunits (MT-CYB, CYC1 and UQCRFS1), 2 core proteins (UQCRC1 and UQCRC2) and 6 low-molecular weight proteins (UQCRH/QCR6, UQCRB/QCR7, UQCRQ/QCR8, UQCR10/QCR9, UQCR11/QCR10 and a cleavage product of UQCRFS1). This cytochrome bc1 complex then forms a dimer. It depends on heme b as a cofactor.

It is found in the mitochondrion inner membrane. In terms of biological role, component of the ubiquinol-cytochrome c reductase complex (complex III or cytochrome b-c1 complex) that is part of the mitochondrial respiratory chain. The b-c1 complex mediates electron transfer from ubiquinol to cytochrome c. Contributes to the generation of a proton gradient across the mitochondrial membrane that is then used for ATP synthesis. In Eudyptes chrysolophus (Macaroni penguin), this protein is Cytochrome b (MT-CYB).